The chain runs to 160 residues: CXXC motif containing zinc binding protein (160 aa).

Residues cysteine 33, cysteine 36, cysteine 67, and cysteine 70 each coordinate Zn(2+). At serine 75 the chain carries Phosphoserine.

This sequence belongs to the UPF0587 family. In terms of assembly, monomer.

The chain is CXXC motif containing zinc binding protein (CZIB) from Bos taurus (Bovine).